The sequence spans 141 residues: MNARGLGSQLKDSIPVTELSASGPFESHDLLRKGFSCVKNELLPSHPLELSEKNFQLNQDKMNFSTLRNIQGLFAPLKLQMEFKAVQQVQRLPFLPSSNLSLDILRGNDETIGFEDILNDPSQSELMGEPHLMVEYKLGLL.

Residue K39 forms a Glycyl lysine isopeptide (Lys-Gly) (interchain with G-Cter in SUMO2) linkage.

It belongs to the POMP/UMP1 family. Constituent of preproteasomes, but not of mature 20S proteasomes. Within the preproteasome, may directly interact with PSMB1/beta6, PSMB4/beta7, PSMB5/beta5, PSMB6/beta1 and PSMB9/beta1i. Interaction with PSMB8/beta5i is controversial. Forms tetramers.

The protein localises to the cytoplasm. It is found in the cytosol. The protein resides in the nucleus. Its subcellular location is the microsome membrane. Its function is as follows. Molecular chaperone essential for the assembly of standard proteasomes and immunoproteasomes. Degraded after completion of proteasome maturation. Mediates the association of 20S preproteasome with the endoplasmic reticulum. The chain is Proteasome maturation protein (POMP) from Bos taurus (Bovine).